The chain runs to 902 residues: Histone-lysine N-methyltransferase CLF (902 aa).

Residues 1–14 are compositionally biased toward low complexity; it reads MASEASPSSSATRS. Disordered regions lie at residues 1–33, 73–107, and 335–522; these read MASE…KEVS, SMER…SNNN, and GKTG…FMGE. Composition is skewed to basic and acidic residues over residues 15–33 and 78–95; these read EPPK…KEVS and GSCK…RDSP. Polar residues predominate over residues 337 to 357; it reads TGTSSDGAGTKTTPTKFSSKL. Residues 394-403 show a composition bias toward low complexity; the sequence is DKVSSSPKVK. The segment covering 404–416 has biased composition (basic residues); that stretch reads GSGRRVGRKRNKN. Positions 438 to 449 are enriched in low complexity; the sequence is SDSIASGSCSPS. Residues 459 to 473 are compositionally biased toward polar residues; it reads ATSSSQKHVKSGNSG. The SANT domain occupies 531–581; the sequence is TNKLWRPLEKSLFDKGVEIFGMNSCLIARNLLSGFKSCWEVFQYMTCSENK. Positions 638 to 737 constitute a CXC domain; the sequence is RKRITEKKDQ…SLGVPSQRGD (100 aa). The region spanning 752–867 is the SET domain; sequence QRVLLGISDV…AGEELFYDYR (116 aa). Tyrosine 866 is a binding site for S-adenosyl-L-methionine. Positions 875-890 are enriched in basic and acidic residues; that stretch reads AWAKKPEAPGSKKDEN. The segment at 875 to 902 is disordered; it reads AWAKKPEAPGSKKDENVTPSVGRPKKLA.

The protein belongs to the class V-like SAM-binding methyltransferase superfamily. Histone-lysine methyltransferase family. EZ subfamily. In terms of assembly, probable component of a PcG complex. In plants, PcG complexes are probably composed of a member of the EZ family (CLF or MEA), FIE, and a member of the VEFS family (FIS2, VRN2 or EMF2). Interacts with FIE. Interacts with RING1A. Binds to ALP1. Interacts with BLI. Binds to ATX1 in the nucleus. Interacts with EOL1. Interacts (via SANT domain) with HXK1 in the nucleus. In terms of tissue distribution, strongly expressed throughout the apical meristem, leaf primordia, and leaves of 7-8 day-old seedling. Weakly expressed in the vasculature of hypocotyl. Strongly expressed throughout the young stages 1 and 2 floral meristems that arose on the flanks of the apex. In stage 3 and 4 flowers, it is expressed in the emerging sepal primordia and in the dome of the floral meristem. During stages 6 and 7, it is strongly expressed in developing petal and stamen, and weakly expressed in the sepals. Late in floral development, at stage 12, it is weakly expressed in all floral whorls, and expressed at intermediate level in petals and ovules.

It is found in the nucleus. It catalyses the reaction L-lysyl-[histone] + S-adenosyl-L-methionine = N(6)-methyl-L-lysyl-[histone] + S-adenosyl-L-homocysteine + H(+). In terms of biological role, polycomb group (PcG) protein. Catalytic subunit of some PcG multiprotein complex, which methylates 'Lys-27' of histone H3, leading to transcriptional repression of the affected target genes, mainly abscisic acid (ABA) responsive elements. Required to regulate floral development by repressing the AGAMOUS homeotic gene in leaves, inflorescence stems and flowers. Together with ATX1, modulates AG nucleosome methylation statement. Regulates the antero-posterior organization of the endosperm, as well as the division and elongation rates of leaf cells. PcG proteins act by forming multiprotein complexes, which are required to maintain the transcriptionally repressive state of homeotic genes throughout development. PcG proteins are not required to initiate repression, but to maintain it during later stages of development. Forms a nuclear complex with EZA1/SWN and HXK1 to target common glucose-responsive genes and regulate glucose signaling by glucose-mediated gene repression. Affects the recruitment of HXK1 to the target chromatin. In Arabidopsis thaliana (Mouse-ear cress), this protein is Histone-lysine N-methyltransferase CLF.